Here is a 544-residue protein sequence, read N- to C-terminus: POTE ankyrin domain family member B2 (544 aa).

ANK repeat units follow at residues 135–167 (QKRTALHLASANGNSEVVQLLLDRRCQLNVLDN), 168–200 (KKRTALIKAVQCQEDECVLMLLEHGADGNIQDE), 201–233 (YGNTALHYAIYNEDKLMAKALLLYGADIESKNK), 234–266 (CGLTPLLLGVHEQKQEVVKFLIKKKANLNALDR), and 267–299 (YGRTALILAVCCGSASIVNLLLEQNVDVSSQDL). The tract at residues 332–457 (SSENSNPEQD…NTGISQDEIL (126 aa)) is disordered. Basic and acidic residues-rich tracts occupy residues 340–355 (QDLKLTSEEESQRLKV) and 364–375 (MSQEPEINKDCD). Polar residues predominate over residues 439-457 (TQKQLSEEQNTGISQDEIL).

Belongs to the POTE family.

This is POTE ankyrin domain family member B2 (POTEB2) from Homo sapiens (Human).